A 676-amino-acid polypeptide reads, in one-letter code: Hypermethylated in cancer 1 protein (676 aa).

Residues 1-27 (APGARPAASRERGHKSREERCGERGAA) are disordered. A compositionally biased stretch (basic and acidic residues) spans 8–23 (ASRERGHKSREERCGE). The region spanning 63–126 (CDVIIVVQNA…IYTGRLGECE (64 aa)) is the BTB domain. The interval 241–245 (GLDLS) is binding to CtBP. Disordered regions lie at residues 264 to 326 (PAEP…LPRG) and 342 to 405 (GPYL…DRYC). 2 stretches are compositionally biased toward basic and acidic residues: residues 266–278 (EPREPSLPPRHDS) and 351–361 (EKELEREEKAE). The segment covering 384–398 (STSEETGSSEGPSPG) has biased composition (low complexity). C2H2-type zinc fingers lie at residues 420–447 (YVCIPCGKGFPSSEQLNAHVEAHNEEEL), 474–501 (YRCSSCDKSYKDPATLRQHEKTHWLTRP), 502–529 (YPCTICGKKFTQRGTMTRHMRSHLGLKP), 530–557 (FACDACGMRFTRQYRLTEHMRIHSGEKP), and 558–585 (YECQVCGGKFAQQRNLISHMKMHAAGPD).

It belongs to the krueppel C2H2-type zinc-finger protein family. Hic subfamily. In terms of assembly, interacts with CtBP. In terms of tissue distribution, isoform 1 is highly expressed in kidney and lung. Expression of isoform 2 is higher in the lens, retina and stomach, and extremely low in heart, muscle, kidney and lung. Isoform 3 is weakly expressed in heart, kidney and lens.

Its subcellular location is the nucleus. Binds specifically to the gamma F-1-binding motif of the gamma F-crystallin promoter. May have a regulatory role in sclerotome specification and/or differentiation. Isoform 2 functions as a transcriptional repressor in lens cells. This is Hypermethylated in cancer 1 protein (HIC1) from Gallus gallus (Chicken).